A 557-amino-acid chain; its full sequence is Dihydroxy-acid dehydratase (557 aa).

Cysteine 47 contacts [2Fe-2S] cluster. Aspartate 79 provides a ligand contact to Mg(2+). Cysteine 120 contributes to the [2Fe-2S] cluster binding site. The Mg(2+) site is built by aspartate 121 and lysine 122. Lysine 122 bears the N6-carboxylysine mark. Cysteine 192 contacts [2Fe-2S] cluster. Mg(2+) is bound at residue glutamate 444. The active-site Proton acceptor is the serine 470.

This sequence belongs to the IlvD/Edd family. As to quaternary structure, homodimer. [2Fe-2S] cluster serves as cofactor. It depends on Mg(2+) as a cofactor.

The catalysed reaction is (2R)-2,3-dihydroxy-3-methylbutanoate = 3-methyl-2-oxobutanoate + H2O. It catalyses the reaction (2R,3R)-2,3-dihydroxy-3-methylpentanoate = (S)-3-methyl-2-oxopentanoate + H2O. It participates in amino-acid biosynthesis; L-isoleucine biosynthesis; L-isoleucine from 2-oxobutanoate: step 3/4. The protein operates within amino-acid biosynthesis; L-valine biosynthesis; L-valine from pyruvate: step 3/4. Functions in the biosynthesis of branched-chain amino acids. Catalyzes the dehydration of (2R,3R)-2,3-dihydroxy-3-methylpentanoate (2,3-dihydroxy-3-methylvalerate) into 2-oxo-3-methylpentanoate (2-oxo-3-methylvalerate) and of (2R)-2,3-dihydroxy-3-methylbutanoate (2,3-dihydroxyisovalerate) into 2-oxo-3-methylbutanoate (2-oxoisovalerate), the penultimate precursor to L-isoleucine and L-valine, respectively. This is Dihydroxy-acid dehydratase from Parasynechococcus marenigrum (strain WH8102).